We begin with the raw amino-acid sequence, 215 residues long: Adenylate kinase (215 aa).

10-15 (GAGKGT) lines the ATP pocket. The NMP stretch occupies residues 30 to 59 (STGDMFRAAMKNETEMGKLAKSFIDKGELV). AMP is bound by residues threonine 31, arginine 36, 57–59 (ELV), 86–89 (GYPR), and glutamine 93. Positions 127–165 (GRYICRNCGATYHKIFNPTKVEGVCDVCGSHDLYQRADD) are LID. Arginine 128 serves as a coordination point for ATP. 2 residues coordinate Zn(2+): cysteine 131 and cysteine 134. ATP is bound at residue 137 to 138 (TY). The Zn(2+) site is built by cysteine 151 and cysteine 154. AMP is bound by residues arginine 162 and arginine 173. Glutamine 201 is an ATP binding site.

This sequence belongs to the adenylate kinase family. As to quaternary structure, monomer.

The protein resides in the cytoplasm. The catalysed reaction is AMP + ATP = 2 ADP. Its pathway is purine metabolism; AMP biosynthesis via salvage pathway; AMP from ADP: step 1/1. Its function is as follows. Catalyzes the reversible transfer of the terminal phosphate group between ATP and AMP. Plays an important role in cellular energy homeostasis and in adenine nucleotide metabolism. The polypeptide is Adenylate kinase (Lactococcus lactis subsp. lactis (strain IL1403) (Streptococcus lactis)).